Consider the following 261-residue polypeptide: Thiamine thiazole synthase (261 aa).

Residues alanine 33, 52 to 53 (ER), glycine 60, valine 124, and 152 to 154 (HVD) each bind NAD(+). Aspartate 154 and histidine 169 together coordinate Fe cation. NAD(+) is bound at residue isoleucine 219. Glycine is bound at residue arginine 229.

It belongs to the THI4 family. Homooctamer; tetramer of dimers. Requires Fe(2+) as cofactor.

It catalyses the reaction hydrogen sulfide + glycine + NAD(+) = ADP-5-ethyl-4-methylthiazole-2-carboxylate + nicotinamide + 3 H2O + H(+). Its pathway is cofactor biosynthesis; thiamine diphosphate biosynthesis. Involved in the biosynthesis of the thiazole moiety of thiamine. Catalyzes the conversion of NAD and glycine to adenosine diphosphate 5-(2-hydroxyethyl)-4-methylthiazole-2-carboxylate (ADT), an adenylated thiazole intermediate, using free sulfide as a source of sulfur. The protein is Thiamine thiazole synthase of Pyrobaculum calidifontis (strain DSM 21063 / JCM 11548 / VA1).